We begin with the raw amino-acid sequence, 630 residues long: Probable potassium transport system protein Kup 1 (630 aa).

The next 12 membrane-spanning stretches (helical) occupy residues 15-35 (LLAM…TSPL), 58-78 (LISL…VLFL), 104-124 (TAIL…DAMI), 142-162 (PALS…LFAV), 173-193 (FFGP…FMHI), 208-228 (AVAF…AVFL), 252-272 (WFTV…AFVL), 290-310 (ALLP…QAVI), 342-362 (IYLP…VFIF), 368-388 (LATA…VLAF), 399-419 (AWWA…FLGA), and 424-444 (IHDG…IMWT).

It belongs to the HAK/KUP transporter (TC 2.A.72) family.

The protein resides in the cell inner membrane. The catalysed reaction is K(+)(in) + H(+)(in) = K(+)(out) + H(+)(out). Transport of potassium into the cell. Likely operates as a K(+):H(+) symporter. In Sinorhizobium medicae (strain WSM419) (Ensifer medicae), this protein is Probable potassium transport system protein Kup 1.